The chain runs to 398 residues: S-adenosylmethionine synthase (398 aa).

ATP is bound at residue His16. Mg(2+) is bound at residue Asp18. Glu51 provides a ligand contact to K(+). Residues Glu64 and Gln108 each contribute to the L-methionine site. Positions 108 to 118 are flexible loop; the sequence is QSADIAQGVDA. ATP-binding positions include 176–178, 242–243, Asp251, 257–258, Ala274, and Lys278; these read DSK, KF, and RK. Asp251 contributes to the L-methionine binding site. Position 282 (Lys282) interacts with L-methionine.

Belongs to the AdoMet synthase family. Homotetramer; dimer of dimers. It depends on Mg(2+) as a cofactor. K(+) is required as a cofactor.

The protein resides in the cytoplasm. The catalysed reaction is L-methionine + ATP + H2O = S-adenosyl-L-methionine + phosphate + diphosphate. Its pathway is amino-acid biosynthesis; S-adenosyl-L-methionine biosynthesis; S-adenosyl-L-methionine from L-methionine: step 1/1. Catalyzes the formation of S-adenosylmethionine (AdoMet) from methionine and ATP. The overall synthetic reaction is composed of two sequential steps, AdoMet formation and the subsequent tripolyphosphate hydrolysis which occurs prior to release of AdoMet from the enzyme. This Rhodopseudomonas palustris (strain HaA2) protein is S-adenosylmethionine synthase.